The following is a 180-amino-acid chain: Cytokinin-beta-glucosidase 4 (180 aa).

Hydrolyzes cytokinin glucosides thus liberating free cytokinins. The chain is Cytokinin-beta-glucosidase 4 (ROLC4) from Panax ginseng (Korean ginseng).